Reading from the N-terminus, the 123-residue chain is Large ribosomal subunit protein uL14 (123 aa).

The protein belongs to the universal ribosomal protein uL14 family. In terms of assembly, part of the 50S ribosomal subunit. Forms a cluster with proteins L3 and L19. In the 70S ribosome, L14 and L19 interact and together make contacts with the 16S rRNA in bridges B5 and B8.

In terms of biological role, binds to 23S rRNA. Forms part of two intersubunit bridges in the 70S ribosome. The protein is Large ribosomal subunit protein uL14 of Aliivibrio salmonicida (strain LFI1238) (Vibrio salmonicida (strain LFI1238)).